A 130-amino-acid polypeptide reads, in one-letter code: Small ribosomal subunit protein uS9 (130 aa).

The disordered stretch occupies residues 105–130 (TRDSRMVERKKPGLKKARRASQFSKR). The segment covering 106–115 (RDSRMVERKK) has biased composition (basic and acidic residues). Over residues 116 to 130 (PGLKKARRASQFSKR) the composition is skewed to basic residues.

Belongs to the universal ribosomal protein uS9 family.

In Oenococcus oeni (strain ATCC BAA-331 / PSU-1), this protein is Small ribosomal subunit protein uS9.